The following is a 171-amino-acid chain: uncharacterized protein (171 aa).

The PfpI endopeptidase domain maps to 3–171 (KKVAIILANE…FNREIVKQLQ (169 aa)).

This sequence belongs to the peptidase C56 family.

This is an uncharacterized protein from Staphylococcus aureus (strain COL).